A 405-amino-acid chain; its full sequence is 3-isopropylmalate dehydrogenase (405 aa).

86–104 (GAANTVWTTPDGRTDVRPE) provides a ligand contact to NAD(+). Substrate-binding residues include Arg111, Arg121, Arg148, and Asp237. Asp237, Asp262, and Asp266 together coordinate Mg(2+). Position 301 to 312 (301 to 312 (GSAPDLGKQKVN)) interacts with NAD(+). Positions 352 to 371 (ADIGGSSSTSEVGDLLPTRS) are disordered.

This sequence belongs to the isocitrate and isopropylmalate dehydrogenases family. As to quaternary structure, homodimer. The cofactor is Mg(2+). Mn(2+) serves as cofactor.

The protein resides in the cytoplasm. It carries out the reaction (2R,3S)-3-isopropylmalate + NAD(+) = 4-methyl-2-oxopentanoate + CO2 + NADH. It participates in amino-acid biosynthesis; L-leucine biosynthesis; L-leucine from 3-methyl-2-oxobutanoate: step 3/4. Functionally, catalyzes the oxidation of 3-carboxy-2-hydroxy-4-methylpentanoate (3-isopropylmalate) to 3-carboxy-4-methyl-2-oxopentanoate. The product decarboxylates to 4-methyl-2 oxopentanoate. The protein is 3-isopropylmalate dehydrogenase (LEU2) of Yarrowia lipolytica (strain CLIB 122 / E 150) (Yeast).